Consider the following 68-residue polypeptide: Defensin gallicin (68 aa).

Residues 1 to 16 (MWIESDAGVAIDRHAR) form the signal peptide.

Post-translationally, contains 5 disulfide bonds. In terms of tissue distribution, expressed in hemolymph, gills, digestive gland, foot, adductor muscles and mantle.

Its subcellular location is the secreted. The protein resides in the target cell membrane. In terms of biological role, shows antibacterial activity against numerous Gram-positive bacteria. It selectively inhibits peptidoglycan biosynthesis through complex formation with the cell wall precursor lipid II (1:1 molar ratio) thus inhibiting cell wall synthesis. The protein is Defensin gallicin of Mytilus galloprovincialis (Mediterranean mussel).